The primary structure comprises 211 residues: Large ribosomal subunit protein mL48 (211 aa).

A mitochondrion-targeting transit peptide spans 1–27 (MSGTLGKVLGVWTNTVSKQGFSLLRFR). At K198 the chain carries N6-succinyllysine.

The protein belongs to the mitochondrion-specific ribosomal protein mL48 family. As to quaternary structure, component of the mitochondrial ribosome large subunit (39S) which comprises a 16S rRNA and about 50 distinct proteins. Interacts with OXA1L.

Its subcellular location is the mitochondrion. In Mus musculus (Mouse), this protein is Large ribosomal subunit protein mL48 (Mrpl48).